A 384-amino-acid chain; its full sequence is tRNA-dihydrouridine(20) synthase [NAD(P)+] (384 aa).

FMN contacts are provided by residues 12–14 (PMV) and Gln-88. Cys-117 serves as the catalytic Proton donor. FMN contacts are provided by residues Lys-160, His-188, 222-224 (NGA), and 249-250 (AE). Residues 359 to 384 (KQKRKQTDHIGSDTKKQKVVPLPTDI) form a disordered region. Basic and acidic residues predominate over residues 363–374 (KQTDHIGSDTKK).

This sequence belongs to the Dus family. Dus2 subfamily. As to quaternary structure, monomer. FMN serves as cofactor. Post-translationally, N-glycosylated.

It is found in the cytoplasm. It localises to the nucleus. The catalysed reaction is 5,6-dihydrouridine(20) in tRNA + NADP(+) = uridine(20) in tRNA + NADPH + H(+). The enzyme catalyses 5,6-dihydrouridine(20) in tRNA + NAD(+) = uridine(20) in tRNA + NADH + H(+). It carries out the reaction a 5,6-dihydrouridine in mRNA + NAD(+) = a uridine in mRNA + NADH + H(+). It catalyses the reaction a 5,6-dihydrouridine in mRNA + NADP(+) = a uridine in mRNA + NADPH + H(+). Functionally, catalyzes the NADPH-dependent synthesis of dihydrouridine, a modified base found in the D-loop of most tRNAs. Specifically modifies U20 in cytoplasmic tRNAs. Also able to mediate dihydrouridylation of some mRNAs, thereby affecting their translation. The sequence is that of tRNA-dihydrouridine(20) synthase [NAD(P)+] (SMM1) from Saccharomyces cerevisiae (strain ATCC 204508 / S288c) (Baker's yeast).